We begin with the raw amino-acid sequence, 49 residues long: Large ribosomal subunit protein bL33 (49 aa).

It belongs to the bacterial ribosomal protein bL33 family.

The protein is Large ribosomal subunit protein bL33 of Pseudothermotoga lettingae (strain ATCC BAA-301 / DSM 14385 / NBRC 107922 / TMO) (Thermotoga lettingae).